A 138-amino-acid chain; its full sequence is Large ribosomal subunit protein uL16 (138 aa).

A compositionally biased stretch (basic residues) spans 1-17; the sequence is MLIPRKVKHRKQHHPRQ. The disordered stretch occupies residues 1 to 22; that stretch reads MLIPRKVKHRKQHHPRQRGIAS.

Belongs to the universal ribosomal protein uL16 family. Part of the 50S ribosomal subunit.

Binds 23S rRNA and is also seen to make contacts with the A and possibly P site tRNAs. This Mycobacterium avium (strain 104) protein is Large ribosomal subunit protein uL16.